A 950-amino-acid polypeptide reads, in one-letter code: Kinase suppressor of Ras 2 (950 aa).

The segment at 239 to 296 (PPLESGHRSLPPSPRQRHAVRTPPRTPNIVTTVTPPGTPPMRKKNKLKPPGTPPPSSR) is disordered. The segment covering 259–273 (RTPPRTPNIVTTVTP) has biased composition (low complexity). Phosphothreonine is present on residues threonine 272 and threonine 276. A Phorbol-ester/DAG-type zinc finger spans residues 412-456 (KHRFSTKYWMSQTCTVCGKGMLFGLKCKNCKLKCHNKCTKEAPPC). Residues histidine 413, cysteine 425, cysteine 428, cysteine 438, cysteine 441, histidine 446, cysteine 449, and cysteine 456 each coordinate Zn(2+). A Phosphoserine; by MARK3 modification is found at serine 474. Threonine 497 carries the phosphothreonine modification. Residues 498–556 (LPKTNKINKDHIPVPYQPDSSSNPSSTTSSTPSSPAPPLPPSATPPSPLHPSPQCTRQQ) are disordered. Positions 517-530 (SSSNPSSTTSSTPS) are enriched in low complexity. Residues 531-548 (SPAPPLPPSATPPSPLHP) show a composition bias toward pro residues. Residues 666 to 931 (LEIGELIGKG…TKLMDMLEKL (266 aa)) form the Protein kinase domain. Residue 672 to 680 (IGKGRFGQV) participates in ATP binding. Residue aspartate 786 is the Proton donor/acceptor of the active site. ATP-binding residues include lysine 788 and aspartate 803.

Belongs to the protein kinase superfamily. TKL Ser/Thr protein kinase family. In terms of assembly, heterodimerizes (via N-terminus) with BRAF (via N-terminus) in a MAP2K1/MEK1-dependent manner. Interacts with BRAF; this increases the low intrinsic protein kinase activity of KSR2. Interacts with MAP2K1, forming a heterodimer that can dimerize to form a heterotetramer. Interacts with MAP3K8, MAPK, RAS and RAF. In terms of processing, phosphorylated on Ser-474 by MARK3. Mainly expressed in brain and kidney.

The protein resides in the cytoplasm. The protein localises to the membrane. The catalysed reaction is L-seryl-[protein] + ATP = O-phospho-L-seryl-[protein] + ADP + H(+). It catalyses the reaction L-threonyl-[protein] + ATP = O-phospho-L-threonyl-[protein] + ADP + H(+). With respect to regulation, kinase activity is inhibited by ASC24. In terms of biological role, location-regulated scaffold connecting MEK to RAF. Has very low protein kinase activity and can phosphorylate MAP2K1 at several Ser and Thr residues with very low efficiency (in vitro). Acts as MAP2K1/MEK1-dependent allosteric activator of BRAF; upon binding to MAP2K1/MEK1, dimerizes with BRAF and promotes BRAF-mediated phosphorylation of MAP2K1/MEK1. Interaction with BRAF enhances KSR2-mediated phosphorylation of MAP2K1 (in vitro). Blocks MAP3K8 kinase activity and MAP3K8-mediated signaling. Acts as a negative regulator of MAP3K3-mediated activation of ERK, JNK and NF-kappa-B pathways, inhibiting MAP3K3-mediated interleukin-8 production. This is Kinase suppressor of Ras 2 from Homo sapiens (Human).